A 124-amino-acid chain; its full sequence is MPTIQQLVRQAREKVVRKSTAPALKESPQKRGVCTRVYTTTPKKPNSALRKVARVRLTNGIEVTAYIPGIGHNLQEHSVVLVRGGRVKDLPGVRYHIVRGTLDAAGVQNRNQGRSKYGAKRPKK.

Asp-89 is modified (3-methylthioaspartic acid).

It belongs to the universal ribosomal protein uS12 family. As to quaternary structure, part of the 30S ribosomal subunit. Contacts proteins S8 and S17. May interact with IF1 in the 30S initiation complex.

Functionally, with S4 and S5 plays an important role in translational accuracy. In terms of biological role, interacts with and stabilizes bases of the 16S rRNA that are involved in tRNA selection in the A site and with the mRNA backbone. Located at the interface of the 30S and 50S subunits, it traverses the body of the 30S subunit contacting proteins on the other side and probably holding the rRNA structure together. The combined cluster of proteins S8, S12 and S17 appears to hold together the shoulder and platform of the 30S subunit. This is Small ribosomal subunit protein uS12 from Moorella thermoacetica (strain ATCC 39073 / JCM 9320).